A 388-amino-acid polypeptide reads, in one-letter code: MVVLMLREILKKVAHFSEQKPFLMLLIILIITVFAGISATNVKSQTAFEKMLPQDNPIIKTLYEVRDEFGGTDVITICIKLKPSDSSDKVVDIRDPRVLKAIKELEDNLRYVDGITSVSSPVDIIIQKNNGIVPNDIDTVKDILNKLPEDKRKRIFNSDYSMTVVNAYTDAGGDQKKLMRVMDDVNERIEETPFPPGVEVIATGTPPMRKLMDELMKESQSFTTTVGLIGILIILIIYFRKPLSSIMPLLPVLIAVIWTGGAMGLLDIPLDMATAGIGSLILGLGIDYGIHLMHRYDEERRKGMPIDKAIETAVVETGTAVMATTATTVVGFLALVLAPLPMMANLGKVCALGISFCMVVVLTLLPALIVIEERHIMPLIKRLKGDTQ.

A run of 6 helical transmembrane segments spans residues 22-42 (FLML…ATNV), 219-239 (SQSF…IIYF), 246-266 (IMPL…MGLL), 273-293 (ATAG…IHLM), 320-340 (AVMA…LAPL), and 351-371 (ALGI…LIVI).

This sequence belongs to the resistance-nodulation-cell division (RND) (TC 2.A.6) family. MmpL subfamily.

It is found in the cell membrane. This is Putative membrane protein MJ1562 from Methanocaldococcus jannaschii (strain ATCC 43067 / DSM 2661 / JAL-1 / JCM 10045 / NBRC 100440) (Methanococcus jannaschii).